The primary structure comprises 365 residues: Carbamoyl phosphate synthase small chain (365 aa).

CPSase regions lie at residues 1-166 (MKRQ…PSPG) and 1-169 (MKRQ…GRGH). The L-glutamine site is built by Ser45, Gly218, and Gly220. The Glutamine amidotransferase type-1 domain maps to 170-357 (RVVLVDFGMK…LTMIENFKKE (188 aa)). Residue Cys245 is the Nucleophile of the active site. 5 residues coordinate L-glutamine: Leu246, Gln249, Asn287, Gly289, and Tyr290. Active-site residues include His330 and Glu332.

The protein belongs to the CarA family. In terms of assembly, composed of two chains; the small (or glutamine) chain promotes the hydrolysis of glutamine to ammonia, which is used by the large (or ammonia) chain to synthesize carbamoyl phosphate. Tetramer of heterodimers (alpha,beta)4.

It catalyses the reaction hydrogencarbonate + L-glutamine + 2 ATP + H2O = carbamoyl phosphate + L-glutamate + 2 ADP + phosphate + 2 H(+). The catalysed reaction is L-glutamine + H2O = L-glutamate + NH4(+). It functions in the pathway amino-acid biosynthesis; L-arginine biosynthesis; carbamoyl phosphate from bicarbonate: step 1/1. It participates in pyrimidine metabolism; UMP biosynthesis via de novo pathway; (S)-dihydroorotate from bicarbonate: step 1/3. Small subunit of the glutamine-dependent carbamoyl phosphate synthetase (CPSase). CPSase catalyzes the formation of carbamoyl phosphate from the ammonia moiety of glutamine, carbonate, and phosphate donated by ATP, constituting the first step of 2 biosynthetic pathways, one leading to arginine and/or urea and the other to pyrimidine nucleotides. The small subunit (glutamine amidotransferase) binds and cleaves glutamine to supply the large subunit with the substrate ammonia. The sequence is that of Carbamoyl phosphate synthase small chain from Bacillus cereus (strain ATCC 10987 / NRS 248).